The following is a 130-amino-acid chain: MHHQKQQQQQKQQGEAPCRHLQWRLSGVVLCVLVVASLVSTAASSPLDPHHLAKRSFFDIQCKGVYDKSIFARLDRICEDCYNLFREPQLHSLCRSDCFKSPYFKGCLQALLLIDEEEKFNQMVEILGKK.

Intrachain disulfides connect cysteine 62–cysteine 98, cysteine 78–cysteine 94, and cysteine 81–cysteine 107. Leucine 127 bears the Leucine amide mark.

The protein belongs to the arthropod CHH/MIH/GIH/VIH hormone family. As to expression, brain and corpus cardiacum.

It is found in the secreted. Functionally, stimulates salt and water reabsorption and inhibits acid secretion in the ileum of S.gregaria. This chain is Ion transport peptide, found in Schistocerca gregaria (Desert locust).